The following is a 66-amino-acid chain: Large ribosomal subunit protein bL33c (66 aa).

The protein belongs to the bacterial ribosomal protein bL33 family.

The protein localises to the plastid. It is found in the chloroplast. This Acorus calamus (Sweet flag) protein is Large ribosomal subunit protein bL33c.